The sequence spans 49 residues: Large ribosomal subunit protein bL33B (49 aa).

The protein belongs to the bacterial ribosomal protein bL33 family.

This is Large ribosomal subunit protein bL33B from Staphylococcus saprophyticus subsp. saprophyticus (strain ATCC 15305 / DSM 20229 / NCIMB 8711 / NCTC 7292 / S-41).